A 318-amino-acid chain; its full sequence is Xanthocillin biosynthesis cluster transcription factor xanC (318 aa).

Basic and acidic residues predominate over residues 1 to 27 (MHSQTTKDEQSKDDSSNEKQDAIERRR). Positions 1 to 39 (MHSQTTKDEQSKDDSSNEKQDAIERRRLQNRLSQRNHRR) are disordered. The bZIP domain maps to 20–52 (QDAIERRRLQNRLSQRNHRRKIRDRIAKLQERV). The interval 25 to 40 (RRRLQNRLSQRNHRRK) is basic motif. The segment at 41–48 (IRDRIAKL) is leucine-zipper. Disordered regions lie at residues 71 to 107 (PPAA…QRNV), 123 to 171 (PSSS…FSLD), and 269 to 318 (GRHC…SMML). 2 stretches are compositionally biased toward low complexity: residues 123–139 (PSSS…PFDL) and 147–171 (STNS…FSLD). The span at 293 to 318 (APSSTPFCPLHPSQSSSLDNYQSMML) shows a compositional bias: polar residues.

This sequence belongs to the bZIP family.

The protein resides in the nucleus. Functionally, transcription regulator that specifically up-regulates the gene cluster that mediates the biosynthesis of the isocyanide xanthocillin and its derivatives. This Aspergillus fumigatus (strain ATCC MYA-4609 / CBS 101355 / FGSC A1100 / Af293) (Neosartorya fumigata) protein is Xanthocillin biosynthesis cluster transcription factor xanC.